Reading from the N-terminus, the 187-residue chain is Elongation factor P (187 aa).

It belongs to the elongation factor P family.

It is found in the cytoplasm. The protein operates within protein biosynthesis; polypeptide chain elongation. Functionally, involved in peptide bond synthesis. Stimulates efficient translation and peptide-bond synthesis on native or reconstituted 70S ribosomes in vitro. Probably functions indirectly by altering the affinity of the ribosome for aminoacyl-tRNA, thus increasing their reactivity as acceptors for peptidyl transferase. The chain is Elongation factor P from Arthrobacter sp. (strain FB24).